The primary structure comprises 403 residues: Phosphoglycerate kinase (403 aa).

Substrate-binding positions include 24-26 (DLN), Arg-39, 62-65 (HLGR), Arg-121, and Arg-161. ATP contacts are provided by residues Lys-211, Gly-299, Glu-330, and 359–362 (GGDS).

It belongs to the phosphoglycerate kinase family. Monomer.

It is found in the cytoplasm. It carries out the reaction (2R)-3-phosphoglycerate + ATP = (2R)-3-phospho-glyceroyl phosphate + ADP. It functions in the pathway carbohydrate degradation; glycolysis; pyruvate from D-glyceraldehyde 3-phosphate: step 2/5. This chain is Phosphoglycerate kinase, found in Corynebacterium kroppenstedtii (strain DSM 44385 / JCM 11950 / CIP 105744 / CCUG 35717).